The sequence spans 564 residues: Mitochondrial distribution and morphology protein 34 (564 aa).

One can recognise an SMP-LTD domain in the interval 1 to 208 (MAFNFNWSPL…VPEYRDRESE (208 aa)). Disordered regions lie at residues 208–240 (ESVN…NALN), 336–397 (SGGS…SAPT), 404–423 (QFSE…PQND), 434–517 (RISQ…DPRQ), and 532–564 (IQEE…AYGH). Residues 209–219 (SVNTLDQSSGP) show a composition bias toward polar residues. Positions 351–365 (SGRHPRPHGKKRKKR) are enriched in basic residues. A compositionally biased stretch (basic and acidic residues) spans 366–376 (VVDLRRPKTTD). A compositionally biased stretch (low complexity) spans 380–390 (SVSGESVFSSE). Polar residues-rich tracts occupy residues 438–462 (GEHT…SRNS) and 477–503 (PRNS…SSAI).

The protein belongs to the MDM34 family. As to quaternary structure, component of the ER-mitochondria encounter structure (ERMES) or MDM complex, composed of mmm1, mdm10, mdm12 and mdm34.

Its subcellular location is the mitochondrion outer membrane. In terms of biological role, component of the ERMES/MDM complex, which serves as a molecular tether to connect the endoplasmic reticulum (ER) and mitochondria. Components of this complex are involved in the control of mitochondrial shape and protein biogenesis, and function in nonvesicular lipid trafficking between the ER and mitochondria. Mdm34 is required for the interaction of the ER-resident membrane protein mmm1 and the outer mitochondrial membrane-resident beta-barrel protein mdm10. This is Mitochondrial distribution and morphology protein 34 from Talaromyces stipitatus (strain ATCC 10500 / CBS 375.48 / QM 6759 / NRRL 1006) (Penicillium stipitatum).